Consider the following 537-residue polypeptide: MTKFIFVTGGVVSGLGKGITSASIGLLMKARGYKTTNIKIDPYINYDAGTMNPYQHGEVFVLDDGGEVDLDLGNYERFLDTSLTFDHNITTGKVYSTVIEKERRGEYLGATVQVIPHITDEIKRRIREIARNYDIVVVEIGGTVGDIESMPFLEAARQMQLEEGRENVAFVHVTYVPKLRVVGEQKTKPTQHSVKELRSLGIQPDAIVARSEDPLEEGARKKISLFTNVPEEAVISAYDVEDTYEVPLLLEREGLGKYLVKRLGLEDREPDLREWEKMVAKYKALQDSVEIAIVGKYVKLTDSYLSIKEALKHASVSNEVKVKIRWIEAEDIEEHGTKLLEGVDGIIVPGGFGARGAEGKIMTIRYARENDIPFLGICFGFQLTVVEFARNVLGMKGAHSTEIDPQTPYPVVDLMPEQRNLDKLGGTMRLGAYPVKIKKGTLAYELYKKDLVYERHRHRWEVNPDYIEAFEKAGLVFSGIAGDDERRMEILELPDKRYFIATQFHPEFKSRPMKPAPVFHGLVKAAKEYKQEKDATH.

The segment at methionine 1 to leucine 265 is amidoligase domain. Serine 13 is a binding site for CTP. Position 13 (serine 13) interacts with UTP. An ATP-binding site is contributed by glycine 14–isoleucine 19. Tyrosine 54 serves as a coordination point for L-glutamine. Aspartate 71 contacts ATP. Residues aspartate 71 and glutamate 139 each contribute to the Mg(2+) site. Residues aspartate 146–glutamate 148, lysine 186–glutamine 191, and lysine 222 each bind CTP. Residues lysine 186–glutamine 191 and lysine 222 contribute to the UTP site. One can recognise a Glutamine amidotransferase type-1 domain in the interval glutamate 290–glutamate 532. Glycine 351 serves as a coordination point for L-glutamine. The active-site Nucleophile; for glutamine hydrolysis is cysteine 378. Residues phenylalanine 379 to glutamine 382, glutamate 402, and arginine 459 contribute to the L-glutamine site. Active-site residues include histidine 505 and glutamate 507.

It belongs to the CTP synthase family. Homotetramer.

The enzyme catalyses UTP + L-glutamine + ATP + H2O = CTP + L-glutamate + ADP + phosphate + 2 H(+). The catalysed reaction is L-glutamine + H2O = L-glutamate + NH4(+). It catalyses the reaction UTP + NH4(+) + ATP = CTP + ADP + phosphate + 2 H(+). Its pathway is pyrimidine metabolism; CTP biosynthesis via de novo pathway; CTP from UDP: step 2/2. With respect to regulation, allosterically activated by GTP, when glutamine is the substrate; GTP has no effect on the reaction when ammonia is the substrate. The allosteric effector GTP functions by stabilizing the protein conformation that binds the tetrahedral intermediate(s) formed during glutamine hydrolysis. Inhibited by the product CTP, via allosteric rather than competitive inhibition. Functionally, catalyzes the ATP-dependent amination of UTP to CTP with either L-glutamine or ammonia as the source of nitrogen. Regulates intracellular CTP levels through interactions with the four ribonucleotide triphosphates. This Pyrococcus abyssi (strain GE5 / Orsay) protein is CTP synthase.